Here is a 559-residue protein sequence, read N- to C-terminus: MKSHLSDIEIAQRTELKPITEIARKLNINDEEIECFGCTKAKISLKIFERLKEKPDGQVILVTSINPTPAGEGKSTVTVGLSQALWQIGKKSIVAMREPSLGPTMGLKGGAAGGGYSQVLPMEDINLHFTGDMHAITAANNALAAFIDNHIHQGNELNIDIRKIVWKRALDLNDRALRETVVGLGGKANGFPREDGFDITVASEIMAVLCLARDLADLKKRLASMIVAYTVDGQPVTAGMLGVQGALALLLKDAIKPNLVQTVEGTPALVHGGPFANIAHGANSLIATKTAAKLADYVVTEAGFGADLGAEKFMHIKTRAGGFTPGAVVIVATVRALKMHGGTPLADLKQKDLEALKRGIANLAKHIETIDAFGLPYVVAVNRFVQDTEDELEAVLGWCRDNGHPAALCNVWEEGGKGGTDLAREVIHVMEQKDNRFSYLYELTDSIEDKLAKISRTVYGAEGVEFTEKAKKQLLELKKNGLDGLPVCVAKTQYSLSDDPGKIGRPQDFSITVRELKPSRGAGFIVALTGSILTMPGLPKHPAALKMDVDESGRAKGLF.

Residue 68 to 75 participates in ATP binding; the sequence is TPAGEGKS.

This sequence belongs to the formate--tetrahydrofolate ligase family.

The enzyme catalyses (6S)-5,6,7,8-tetrahydrofolate + formate + ATP = (6R)-10-formyltetrahydrofolate + ADP + phosphate. The protein operates within one-carbon metabolism; tetrahydrofolate interconversion. The chain is Formate--tetrahydrofolate ligase from Bacillus licheniformis (strain ATCC 14580 / DSM 13 / JCM 2505 / CCUG 7422 / NBRC 12200 / NCIMB 9375 / NCTC 10341 / NRRL NRS-1264 / Gibson 46).